The following is a 646-amino-acid chain: Translation initiation factor IF-2 (646 aa).

Residues 146–315 (PRPPVVTVMG…LLVAEMEELR (170 aa)) enclose the tr-type G domain. The tract at residues 155–162 (GHVDHGKT) is G1. 155–162 (GHVDHGKT) contributes to the GTP binding site. Residues 180–184 (GITQH) form a G2 region. The G3 stretch occupies residues 201–204 (DTPG). GTP is bound by residues 201 to 205 (DTPGH) and 255 to 258 (NKID). Residues 255–258 (NKID) form a G4 region. A G5 region spans residues 291-293 (SAK).

It belongs to the TRAFAC class translation factor GTPase superfamily. Classic translation factor GTPase family. IF-2 subfamily.

It is found in the cytoplasm. Its function is as follows. One of the essential components for the initiation of protein synthesis. Protects formylmethionyl-tRNA from spontaneous hydrolysis and promotes its binding to the 30S ribosomal subunits. Also involved in the hydrolysis of GTP during the formation of the 70S ribosomal complex. This is Translation initiation factor IF-2 from Clostridioides difficile (strain 630) (Peptoclostridium difficile).